Reading from the N-terminus, the 263-residue chain is uncharacterized protein (263 aa).

A run of 7 helical transmembrane segments spans residues 53–73, 103–123, 130–150, 153–173, 181–201, 213–233, and 241–261; these read FWIILILTFISLCEVKLLVKI, GFLFGSPFAIGQIILFLLPGL, IILPLLLSSLGLFGFGLVFSY, LIPAALNFFLNYSDEVIEPLW, FILVLFYSTGLAFQIPIIQIL, MLAAWRYIILVSTIIGAILTP, and LLLSIAILMLYFSGVGILFLI.

It belongs to the TatC family.

The protein resides in the plastid. The protein localises to the chloroplast membrane. This is an uncharacterized protein from Trieres chinensis (Marine centric diatom).